A 216-amino-acid chain; its full sequence is Enolase-phosphatase E1 (216 aa).

Asp8 and Glu10 together coordinate Mg(2+). Substrate is bound by residues 115 to 116 (SS) and Lys149. Asp172 is a binding site for Mg(2+).

The protein belongs to the HAD-like hydrolase superfamily. MasA/MtnC family. Monomer. Mg(2+) serves as cofactor.

It is found in the cytoplasm. The protein resides in the nucleus. The catalysed reaction is 5-methylsulfanyl-2,3-dioxopentyl phosphate + H2O = 1,2-dihydroxy-5-(methylsulfanyl)pent-1-en-3-one + phosphate. Its pathway is amino-acid biosynthesis; L-methionine biosynthesis via salvage pathway; L-methionine from S-methyl-5-thio-alpha-D-ribose 1-phosphate: step 3/6. It functions in the pathway amino-acid biosynthesis; L-methionine biosynthesis via salvage pathway; L-methionine from S-methyl-5-thio-alpha-D-ribose 1-phosphate: step 4/6. Functionally, bifunctional enzyme that catalyzes the enolization of 2,3-diketo-5-methylthiopentyl-1-phosphate (DK-MTP-1-P) into the intermediate 2-hydroxy-3-keto-5-methylthiopentenyl-1-phosphate (HK-MTPenyl-1-P), which is then dephosphorylated to form the acireductone 1,2-dihydroxy-3-keto-5-methylthiopentene (DHK-MTPene). The chain is Enolase-phosphatase E1 (utr4) from Schizosaccharomyces pombe (strain 972 / ATCC 24843) (Fission yeast).